The sequence spans 87 residues: uncharacterized protein (87 aa).

The signal sequence occupies residues 1–25 (MKIRKILLSSALSFGMLISAVPALA).

This is an uncharacterized protein from Bacillus subtilis (strain 168).